The chain runs to 125 residues: Small ribosomal subunit protein eS8 (125 aa).

The interval 1-35 is disordered; sequence MQWQGRSVRKPSGGRYHTSQGKKRTEIGRAPAETH.

This sequence belongs to the eukaryotic ribosomal protein eS8 family. Part of the 30S ribosomal subunit.

The sequence is that of Small ribosomal subunit protein eS8 from Methanoculleus marisnigri (strain ATCC 35101 / DSM 1498 / JR1).